A 257-amino-acid polypeptide reads, in one-letter code: Acetylglutamate kinase (257 aa).

Substrate-binding positions include Gly-43–Gly-44, Arg-65, and Asn-157.

This sequence belongs to the acetylglutamate kinase family. ArgB subfamily.

It localises to the cytoplasm. It catalyses the reaction N-acetyl-L-glutamate + ATP = N-acetyl-L-glutamyl 5-phosphate + ADP. The protein operates within amino-acid biosynthesis; L-arginine biosynthesis; N(2)-acetyl-L-ornithine from L-glutamate: step 2/4. In terms of biological role, catalyzes the ATP-dependent phosphorylation of N-acetyl-L-glutamate. The protein is Acetylglutamate kinase of Actinobacillus succinogenes (strain ATCC 55618 / DSM 22257 / CCUG 43843 / 130Z).